Reading from the N-terminus, the 308-residue chain is uncharacterized protein (308 aa).

Residues 1 to 19 form the signal peptide; the sequence is MKLLLILILIINNYNLCLS. Residues Asn-25 and Asn-300 are each glycosylated (N-linked (GlcNAc...) asparagine).

The protein resides in the secreted. This is an uncharacterized protein from Dictyostelium discoideum (Social amoeba).